The chain runs to 154 residues: Ecotin-like protein 2 (154 aa).

Belongs to the protease inhibitor I11 (ecotin) family.

The protein is Ecotin-like protein 2 of Leishmania braziliensis.